The sequence spans 217 residues: MGIEVCVKAASGAPDVLGDCPFGQRILLTLEDKKLPYKTHLIDVSLKPDWFLAISPKGKLPLVKFDEDENWVADSDLIVGIIEEKYPEPSLVTFPPEFASVGSKIIGAFVMFLTSKDHANDGSDMALLDELEALDHHLKTHVGPFVAGDKVTVVDLSLAPKLYHLETTLGHFMDWCVPESLTNVRDYMKVLFSLESFEKTKAAKEYLIASWAPKLDV.

Glutathione contacts are provided by Lys-8 and Asp-19. The L-ascorbate site is built by Lys-8 and Asp-19. Residues 10-85 (ASGAPDVLGD…DLIVGIIEEK (76 aa)) form the GST N-terminal domain. The Nucleophile role is filled by Cys-20. A Glutathione-binding motif is present at residues 20-25 (CPFGQR). Glutathione is bound by residues Lys-47, Ser-75, His-164, and Trp-211. Residues 86–217 (YPEPSLVTFP…IASWAPKLDV (132 aa)) enclose the GST C-terminal domain. Residue Lys-214 participates in L-ascorbate binding.

It belongs to the GST superfamily. DHAR family. Monomer.

The protein resides in the cytoplasm. Its subcellular location is the cytosol. The enzyme catalyses RX + glutathione = an S-substituted glutathione + a halide anion + H(+). It carries out the reaction L-dehydroascorbate + 2 glutathione = glutathione disulfide + L-ascorbate. Its function is as follows. Exhibits glutathione-dependent thiol transferase and dehydroascorbate (DHA) reductase activities. This chain is Probable glutathione S-transferase DHAR4 (DHAR4), found in Arabidopsis thaliana (Mouse-ear cress).